A 235-amino-acid polypeptide reads, in one-letter code: Probable carboxylesterase Os04g0669600 (235 aa).

Catalysis depends on charge relay system residues Ser-113, Asp-167, and His-199.

It belongs to the AB hydrolase superfamily. AB hydrolase 2 family.

In terms of biological role, possesses carboxylesterase activity in vitro. The chain is Probable carboxylesterase Os04g0669600 from Oryza sativa subsp. japonica (Rice).